We begin with the raw amino-acid sequence, 353 residues long: Protein RecA (353 aa).

67–74 (GPESSGKT) contributes to the ATP binding site. Residues 330–353 (SNPNSTPDFSVDDSEGVAETNEDF) are disordered. Positions 339–353 (SVDDSEGVAETNEDF) are enriched in acidic residues.

The protein belongs to the RecA family.

The protein resides in the cytoplasm. In terms of biological role, can catalyze the hydrolysis of ATP in the presence of single-stranded DNA, the ATP-dependent uptake of single-stranded DNA by duplex DNA, and the ATP-dependent hybridization of homologous single-stranded DNAs. It interacts with LexA causing its activation and leading to its autocatalytic cleavage. This Shigella sonnei protein is Protein RecA.